A 357-amino-acid polypeptide reads, in one-letter code: Hydroxyproline O-arabinosyltransferase RDN1 (357 aa).

Residues 13–33 traverse the membrane as a helical; Signal-anchor segment; the sequence is LLMLLMVLGFSFATYNLVFMM.

Expressed in the vasculature of leaves, petioles, stems and roots. Expressed in the vascular cylinder throughout the root, and nodule vasculature.

It localises to the golgi apparatus membrane. It carries out the reaction trans-4-hydroxy-L-prolyl-[protein] + UDP-beta-L-arabinofuranose = O-(beta-L-arabinofuranosyl)-trans-4-hydroxy-L-prolyl-[protein] + UDP + H(+). Functionally, probable glycosyltransferase involved in the O-arabinosylation of several proteins including extensins and small signaling peptides. Catalyzes the transfer of the initial L-arabinose to the hydroxyl group of Hyp residues. Probably involved in the arabinosylation of CLE12, a signaling peptide that moves from root to shoot, to interact with SUNN receptor kinase signaling that regulates nodulation. Involved in long distance nodulation signaling events. Involved in the autoregulation of nodulation (AON), a long distance systemic signaling from root to shoot and back again, which allows legumes to limit the number of root nodules formed based on available nitrogen and previous rhizobial colonization. Functions in the root, upstream of the shoot receptor kinase SUNN and via CLE peptide, to control AON. The chain is Hydroxyproline O-arabinosyltransferase RDN1 from Medicago truncatula (Barrel medic).